The following is an 817-amino-acid chain: LPS-assembly protein LptD (817 aa).

The first 45 residues, 1-45 (MDRLPLPHALHVPTHRPFAAPLPPRRLLARLAALMLCGVPLAVLA), serve as a signal peptide directing secretion.

It belongs to the LptD family. Component of the lipopolysaccharide transport and assembly complex. Interacts with LptE and LptA.

The protein localises to the cell outer membrane. Functionally, together with LptE, is involved in the assembly of lipopolysaccharide (LPS) at the surface of the outer membrane. This chain is LPS-assembly protein LptD, found in Acidovorax sp. (strain JS42).